Reading from the N-terminus, the 463-residue chain is Retinoic acid receptor RXR-gamma (463 aa).

Positions 1–138 (MYGNYSHFMK…TSPGSLVKHI (138 aa)) are modulating. The disordered stretch occupies residues 16–53 (GGSPGHTGSTSMSPSVALPTGKPMDSHPSYTDTPVSAP). 2 consecutive NR C4-type zinc fingers follow at residues 139-159 (CAIC…CEGC) and 175-199 (CRDN…YQKC). The nuclear receptor DNA-binding region spans 139–204 (CAICGDRSSG…RYQKCLVMGM (66 aa)). The tract at residues 205 to 230 (KREAVQEERQRSRERAESEAECASSS) is hinge. Residues 211–222 (EERQRSRERAES) show a composition bias toward basic and acidic residues. Residues 211–232 (EERQRSRERAESEAECASSSHE) form a disordered region. The region spanning 231 to 459 (HEDMPVERIL…SFLMEMLETP (229 aa)) is the NR LBD domain.

This sequence belongs to the nuclear hormone receptor family. NR2 subfamily. As to quaternary structure, homodimer. Heterodimer with a RAR molecule. Binds DNA preferentially as a RAR/RXR heterodimer. Interacts with RARA. Post-translationally, acetylated by EP300.

Its subcellular location is the nucleus. It localises to the cytoplasm. Receptor for retinoic acid. Retinoic acid receptors bind as heterodimers to their target response elements in response to their ligands, all-trans or 9-cis retinoic acid, and regulate gene expression in various biological processes. The RAR/RXR heterodimers bind to the retinoic acid response elements (RARE) composed of tandem 5'-AGGTCA-3' sites known as DR1-DR5. The high affinity ligand for RXRs is 9-cis retinoic acid. The protein is Retinoic acid receptor RXR-gamma (Rxrg) of Mus musculus (Mouse).